Consider the following 305-residue polypeptide: Methionyl-tRNA formyltransferase (305 aa).

Residue 111-114 participates in (6S)-5,6,7,8-tetrahydrofolate binding; sequence SLLP.

It belongs to the Fmt family.

It carries out the reaction L-methionyl-tRNA(fMet) + (6R)-10-formyltetrahydrofolate = N-formyl-L-methionyl-tRNA(fMet) + (6S)-5,6,7,8-tetrahydrofolate + H(+). Attaches a formyl group to the free amino group of methionyl-tRNA(fMet). The formyl group appears to play a dual role in the initiator identity of N-formylmethionyl-tRNA by promoting its recognition by IF2 and preventing the misappropriation of this tRNA by the elongation apparatus. The protein is Methionyl-tRNA formyltransferase of Campylobacter jejuni (strain RM1221).